The following is a 255-amino-acid chain: ATP synthase subunit b 1 (255 aa).

A helical membrane pass occupies residues 5-22 (WITVAAQIVNFLLLIWLL).

Belongs to the ATPase B chain family. In terms of assembly, F-type ATPases have 2 components, F(1) - the catalytic core - and F(0) - the membrane proton channel. F(1) has five subunits: alpha(3), beta(3), gamma(1), delta(1), epsilon(1). F(0) has three main subunits: a(1), b(2) and c(10-14). The alpha and beta chains form an alternating ring which encloses part of the gamma chain. F(1) is attached to F(0) by a central stalk formed by the gamma and epsilon chains, while a peripheral stalk is formed by the delta and b chains.

Its subcellular location is the cell inner membrane. In terms of biological role, f(1)F(0) ATP synthase produces ATP from ADP in the presence of a proton or sodium gradient. F-type ATPases consist of two structural domains, F(1) containing the extramembraneous catalytic core and F(0) containing the membrane proton channel, linked together by a central stalk and a peripheral stalk. During catalysis, ATP synthesis in the catalytic domain of F(1) is coupled via a rotary mechanism of the central stalk subunits to proton translocation. Component of the F(0) channel, it forms part of the peripheral stalk, linking F(1) to F(0). This chain is ATP synthase subunit b 1, found in Dinoroseobacter shibae (strain DSM 16493 / NCIMB 14021 / DFL 12).